A 161-amino-acid chain; its full sequence is Protein-export protein SecB (161 aa).

Belongs to the SecB family. As to quaternary structure, homotetramer, a dimer of dimers. One homotetramer interacts with 1 SecA dimer.

Its subcellular location is the cytoplasm. One of the proteins required for the normal export of preproteins out of the cell cytoplasm. It is a molecular chaperone that binds to a subset of precursor proteins, maintaining them in a translocation-competent state. It also specifically binds to its receptor SecA. This chain is Protein-export protein SecB, found in Methylocella silvestris (strain DSM 15510 / CIP 108128 / LMG 27833 / NCIMB 13906 / BL2).